The chain runs to 92 residues: Putative phosphotransferase enzyme IIB component SgcB (92 aa).

The PTS EIIB type-2 domain occupies 1–92 (MKKILVACGT…KQQIKALLTQ (92 aa)). C8 serves as the catalytic Phosphocysteine intermediate.

The protein localises to the cytoplasm. Its function is as follows. The phosphoenolpyruvate-dependent sugar phosphotransferase system (sugar PTS), a major carbohydrate active -transport system, catalyzes the phosphorylation of incoming sugar substrates concomitantly with their translocation across the cell membrane. In Escherichia coli (strain K12), this protein is Putative phosphotransferase enzyme IIB component SgcB (sgcB).